The following is a 129-amino-acid chain: Small ribosomal subunit protein uS11 (129 aa).

This sequence belongs to the universal ribosomal protein uS11 family. In terms of assembly, part of the 30S ribosomal subunit. Interacts with proteins S7 and S18. Binds to IF-3.

Its function is as follows. Located on the platform of the 30S subunit, it bridges several disparate RNA helices of the 16S rRNA. Forms part of the Shine-Dalgarno cleft in the 70S ribosome. The polypeptide is Small ribosomal subunit protein uS11 (Lacticaseibacillus casei (strain BL23) (Lactobacillus casei)).